The chain runs to 440 residues: Oligodendrocyte-myelin glycoprotein (440 aa).

A signal peptide spans 1 to 24 (MEYQILKMSSCLFILLFLTPGILC). Positions 25-55 (ICPLQCTCTERHRHVDCSGRNLTTLPPGLQE) constitute an LRRNT domain. Asparagine 45 and asparagine 61 each carry an N-linked (GlcNAc...) asparagine glycan. LRR repeat units follow at residues 56–78 (NIIHLNLSYNHFTDLHNQLTPYT), 79–100 (NLRTLDISNNRLESLPAQLPRS), 101–121 (LWNMSAANNNIKLLDKSDTAY), 124–145 (NLKYLDVSKNMLEKVVLIKNTL), 147–168 (SLEVLNLSSNKLWTVPTNMPSK), 169–189 (LHIVDLSNNSLTQILPGTLIN), 192–213 (NLTHLYLHNNKFTFIPEQSFDQ), and 216–239 (QLQEITLHNNRWSCDHKQNITYLL). Asparagine 103 carries an N-linked (GlcNAc...) asparagine glycan. N-linked (GlcNAc...) asparagine glycosylation is found at asparagine 152, asparagine 176, asparagine 189, asparagine 192, and asparagine 234. Ser/Thr-rich repeat units lie at residues 229–270 (CDHK…YPTP), 271–292 (PGFTSSLFTMSEMQTVDTINSL), 293–335 (SMVT…VAYP), 336–377 (EDTP…PPSP), and 378–416 (VTLSIARGMPNNFSEMPRQSTTLNLRREETTANGNTRPP). Asparagine 364 and asparagine 389 each carry an N-linked (GlcNAc...) asparagine glycan. A lipid anchor (GPI-anchor amidated serine) is attached at serine 417. A propeptide spans 418–440 (AASAWKVNASLLLMLNAVVMLAG) (removed in mature form). The N-linked (GlcNAc...) asparagine glycan is linked to asparagine 425.

In terms of assembly, binds to RTN4R. Post-translationally, O-glycosylated in its Ser/Thr-rich repeat domain. As to expression, oligodendrocytes and myelin of the central nervous system.

The protein localises to the cell membrane. In terms of biological role, cell adhesion molecule contributing to the interactive process required for myelination in the central nervous system. The sequence is that of Oligodendrocyte-myelin glycoprotein (Omg) from Mus musculus (Mouse).